Reading from the N-terminus, the 44-residue chain is Photosystem I reaction center subunit IX (44 aa).

A helical transmembrane segment spans residues Tyr7–Ile27.

The protein belongs to the PsaJ family.

It localises to the plastid. Its subcellular location is the chloroplast thylakoid membrane. Functionally, may help in the organization of the PsaE and PsaF subunits. The protein is Photosystem I reaction center subunit IX of Eucalyptus globulus subsp. globulus (Tasmanian blue gum).